The primary structure comprises 474 residues: Lysosomal protective protein (474 aa).

The N-terminal stretch at 1-23 (MPGTALSPLLLLLLLSWASRNEA) is a signal peptide. 4 disulfides stabilise this stretch: C83–C356, C235–C251, C236–C241, and C276–C325. An N-linked (GlcNAc...) (high mannose) asparagine glycan is attached at N140. S173 is a catalytic residue. Residue N327 is glycosylated (N-linked (GlcNAc...) (high mannose) asparagine). Catalysis depends on residues D394 and H451.

It belongs to the peptidase S10 family. In terms of assembly, heterodimer of a 32 kDa chain and a 20 kDa chain; disulfide-linked.

It localises to the lysosome. The catalysed reaction is Release of a C-terminal amino acid with broad specificity.. In terms of biological role, protective protein appears to be essential for both the activity of beta-galactosidase and neuraminidase, it associates with these enzymes and exerts a protective function necessary for their stability and activity. This protein is also a carboxypeptidase and can deamidate tachykinins. In Mus musculus (Mouse), this protein is Lysosomal protective protein (Ctsa).